Consider the following 189-residue polypeptide: MAQERRPQREDRQSREERDSEFVDKLVAINRVAKVVKGGRRFGFAALVVVGDQKGRVGFGHGKAREVPEAIRKATEAAKRELIFVPLRDGRTLHHDVHGRHGAGKVLLRSAKVGTGIIAGGPMRAVFETLGMHDVVAKSTGSSNPYNMVRATFDALKHQVHPKDIAAQRGIKYATLQARRSASGNASEE.

An S5 DRBM domain is found at 22-85 (FVDKLVAINR…EAAKRELIFV (64 aa)).

It belongs to the universal ribosomal protein uS5 family. As to quaternary structure, part of the 30S ribosomal subunit. Contacts proteins S4 and S8.

Its function is as follows. With S4 and S12 plays an important role in translational accuracy. In terms of biological role, located at the back of the 30S subunit body where it stabilizes the conformation of the head with respect to the body. In Rhizobium etli (strain CIAT 652), this protein is Small ribosomal subunit protein uS5.